Reading from the N-terminus, the 427-residue chain is MLNPYLLRNELHLTAKKLLKKGYKLNISKISSMEEKRKTLQIQTENLQFKHNALSNLFKENKNIKNKNELLRHQVIQSSKDLNASKIELNSLKEKIHHFSMCIPNIPSDDVPEGNTSINNKEIKYWGQKKKYDFEIQDHIELGKKFNELDWKSSAQMSGSRFVIMKGKIALLHRALSQFMLDLHTLKHGYIESYVPYLVHSEALYGTGQLPKFSDDLFHINLTDKKKYILIPTGEVPLTNLVYDQIIDEKDLPIMLTAHTPCFRSEASSYGRDTKGLIRLHQFDKVELVQIVKPEKSYEALEKLTNHAEKVLQLLNLPYRKMLLCTGDTGFAAVKTYDLEVWFPSEKKYREVSSCSNMSDFQARRIKARYRKKSEQKNFFVHTLNGSGLAIGRTLAAILENYQHSNGRIEIPKVLQKKYMQGLEFIN.

An L-serine-binding site is contributed by 233 to 235; the sequence is TGE. ATP is bound at residue 264–266; sequence RSE. L-serine is bound at residue Glu-287. Residue 351 to 354 participates in ATP binding; sequence EVSS. L-serine is bound at residue Ser-387.

The protein belongs to the class-II aminoacyl-tRNA synthetase family. Type-1 seryl-tRNA synthetase subfamily. As to quaternary structure, homodimer. The tRNA molecule binds across the dimer.

It localises to the cytoplasm. It carries out the reaction tRNA(Ser) + L-serine + ATP = L-seryl-tRNA(Ser) + AMP + diphosphate + H(+). The catalysed reaction is tRNA(Sec) + L-serine + ATP = L-seryl-tRNA(Sec) + AMP + diphosphate + H(+). The protein operates within aminoacyl-tRNA biosynthesis; selenocysteinyl-tRNA(Sec) biosynthesis; L-seryl-tRNA(Sec) from L-serine and tRNA(Sec): step 1/1. In terms of biological role, catalyzes the attachment of serine to tRNA(Ser). Is also able to aminoacylate tRNA(Sec) with serine, to form the misacylated tRNA L-seryl-tRNA(Sec), which will be further converted into selenocysteinyl-tRNA(Sec). In Buchnera aphidicola subsp. Acyrthosiphon pisum (strain 5A), this protein is Serine--tRNA ligase.